Consider the following 835-residue polypeptide: BCL11 transcription factor A (835 aa).

Over residues 1–12 the composition is skewed to basic residues; the sequence is MSRRKQGKPQHL. A disordered region spans residues 1–41; it reads MSRRKQGKPQHLSKREFSPEPLEAILTDDEPDHGPLGAPEG. The segment at 1 to 210 is required for nuclear body formation and for SUMO1 recruitment; that stretch reads MSRRKQGKPQ…SEHGSPLTPR (210 aa). Residues 45–71 form a C2HC-type zinc finger; it reads LLTCGQCQMNFPLGDILIFIEHKRKQC. Residues cysteine 48, cysteine 51, histidine 66, and cysteine 71 each coordinate Zn(2+). Serine 86 carries the phosphoserine modification. Glycyl lysine isopeptide (Lys-Gly) (interchain with G-Cter in SUMO2) cross-links involve residues lysine 123 and lysine 164. The segment at 170–193 adopts a C2H2-type 1 zinc-finger fold; sequence YTCTTCKQPFTSAWFLLQHAQNTH. Phosphoserine is present on serine 205. Asymmetric dimethylarginine is present on arginine 271. The tract at residues 323–376 is disordered; that stretch reads AGNTSSPPLSPGRPSPMQRLLQPFQPGSKPPFLATPPLPPLQSAPPPSQPPVKS. Residues serine 332 and serine 337 each carry the phosphoserine modification. Positions 355–372 are enriched in pro residues; sequence LATPPLPPLQSAPPPSQP. 2 consecutive C2H2-type zinc fingers follow at residues 377–399 and 405–429; these read KSCEFCGKTFKFQSNLVVHRRSH and YKCNLCDHACTQASKLKRHMKTHMH. Residues 421–430 are compositionally biased toward basic residues; that stretch reads KRHMKTHMHK. 3 disordered regions span residues 421–458, 471–512, and 572–619; these read KRHMKTHMHKSSPMTVKSDDGLSTASSPEPGTSDLVGS, KSEN…ERVD, and RGHL…GLSK. Over residues 441–450 the composition is skewed to polar residues; it reads GLSTASSPEP. Phosphoserine occurs at positions 446 and 447. Acidic residues predominate over residues 482–506; sequence NGDEEEEEDDEEEEEEEEEEEEELT. Residues 574–584 are compositionally biased toward basic and acidic residues; the sequence is HLAEAEGHRDT. Residue serine 608 is modified to Phosphoserine. Residue lysine 620 forms a Glycyl lysine isopeptide (Lys-Gly) (interchain with G-Cter in SUMO2) linkage. Phosphoserine is present on residues serine 625 and serine 630. Residue lysine 634 forms a Glycyl lysine isopeptide (Lys-Gly) (interchain with G-Cter in SUMO1) linkage. Residues 678 to 740 form a disordered region; the sequence is DSRQSPFASS…GRPSSKEGRR (63 aa). Low complexity predominate over residues 682 to 696; it reads SPFASSSEHSSENGS. The residue at position 701 (threonine 701) is a Phosphothreonine. A compositionally biased stretch (gly residues) spans 706-720; that stretch reads LDGGISGRSGTGSGG. The DNA-binding stretch occupies residues 737 to 835; it reads EGRRSDTCEY…RVLNNDIKTE (99 aa). The C2H2-type 4 zinc-finger motif lies at 742–764; it reads DTCEYCGKVFKNCSNLTVHRRSH. The Zn(2+) site is built by cysteine 744, cysteine 747, histidine 760, and histidine 764. The disordered stretch occupies residues 765–769; it reads TGERP. Residues 770–792 form a C2H2-type 5 zinc finger; that stretch reads YKCELCNYACAQSSKLTRHMKTH. 4 residues coordinate Zn(2+): cysteine 772, cysteine 775, histidine 788, and histidine 792. Positions 793–799 are disordered; that stretch reads GQVGKDV. The C2H2-type 6 zinc finger occupies 800–823; that stretch reads YKCEICKMPFSVYSTLEKHMKKWH. Residues cysteine 802, cysteine 805, histidine 818, and histidine 823 each coordinate Zn(2+). Lysine 833 participates in a covalent cross-link: Glycyl lysine isopeptide (Lys-Gly) (interchain with G-Cter in SUMO2).

As to quaternary structure, homotetrameric; self-associates via C2HC-type zinc finger domain. Interacts with MTA2, a component of the nucleosome remodeling and deacetylase (NuRD) repressor complex. Interacts (via its C2H2-type zinc finger domains 4, 5 and 6) with promoter region of gamma-globulin. Interacts with NR2F1, PIAS3, NR2F2 and NR2F6. Isoform 1, isoform 2 and isoform 3 form homodimers and heterodimers. Isoform 2 interacts with TBR1. Post-translationally, sumoylated with SUMO1. As to expression, expressed at high levels in brain, spleen thymus, bone marrow and testis. Expressed in CD34-positive myeloid precursor cells, B-cells, monocytes and megakaryocytes. Expression is tightly regulated during B-cell development. Expressed in fetal and adult brain, and in the plasmacytoid dendritic cell.

The protein resides in the cytoplasm. The protein localises to the nucleus. It is found in the chromosome. It localises to the nucleus matrix. In terms of biological role, transcription factor. Associated with the BAF SWI/SNF chromatin remodeling complex. Binds to the 5'-TGACCA-3' sequence motif in regulatory regions of target genes, including a distal promoter of the HBG1 hemoglobin subunit gamma-1 gene. Involved in regulation of the developmental switch from gamma- to beta-globin, probably via direct repression of HBG1; hence indirectly repressing fetal hemoglobin (HbF) level. Involved in brain development. May play a role in hematopoiesis. Essential factor in lymphopoiesis required for B-cell formation in fetal liver. May function as a modulator of the transcriptional repression activity of NR2F2. This Homo sapiens (Human) protein is BCL11 transcription factor A (BCL11A).